We begin with the raw amino-acid sequence, 366 residues long: Protein-glutamate methylesterase/protein-glutamine glutaminase of group 2 operon (366 aa).

Residues 19–136 enclose the Response regulatory domain; that stretch reads RVLIVDDSAM…GQGLPAIMRD (118 aa). Asp-70 is modified (4-aspartylphosphate). Residues 162–356 form the CheB-type methylesterase domain; it reads PGASEDWIHA…ARMMLAAAAD (195 aa). Active-site residues include Ser-175, His-201, and Asp-298.

The protein belongs to the CheB family. Phosphorylated by CheA. Phosphorylation of the N-terminal regulatory domain activates the methylesterase activity.

The protein resides in the cytoplasm. The catalysed reaction is [protein]-L-glutamate 5-O-methyl ester + H2O = L-glutamyl-[protein] + methanol + H(+). It carries out the reaction L-glutaminyl-[protein] + H2O = L-glutamyl-[protein] + NH4(+). Its function is as follows. Involved in chemotaxis. Part of a chemotaxis signal transduction system that modulates chemotaxis in response to various stimuli. Catalyzes the demethylation of specific methylglutamate residues introduced into the chemoreceptors (methyl-accepting chemotaxis proteins or MCP) by CheR. Also mediates the irreversible deamidation of specific glutamine residues to glutamic acid. The polypeptide is Protein-glutamate methylesterase/protein-glutamine glutaminase of group 2 operon (Cereibacter sphaeroides (Rhodobacter sphaeroides)).